The primary structure comprises 915 residues: Probable dipeptidyl-aminopeptidase B (915 aa).

Disordered stretches follow at residues 1–20 and 52–74; these read MAGE…TRGS and QDSR…NEEE. Topologically, residues 1–95 are cytoplasmic; it reads MAGEKGGSRD…GGKTVQKTTK (95 aa). Positions 55–72 are enriched in basic and acidic residues; the sequence is RLGEKDQRDDDHDQYRNE. The helical; Signal-anchor for type II membrane protein transmembrane segment at 96 to 116 threads the bilayer; sequence IVLWALLFLCVGGWSLAFVIF. At 117 to 915 the chain is on the vacuolar side; sequence LFRGHDTPQT…RAETWGGLPV (799 aa). N133, N179, N349, and N572 each carry an N-linked (GlcNAc...) asparagine glycan. S754 serves as the catalytic Charge relay system. An N-linked (GlcNAc...) asparagine glycan is attached at N813. Active-site charge relay system residues include D831 and H864. The N-linked (GlcNAc...) asparagine glycan is linked to N900.

The protein belongs to the peptidase S9B family.

It is found in the vacuole membrane. It carries out the reaction Release of an N-terminal dipeptide, Xaa-Yaa-|-Zaa-, from a polypeptide, preferentially when Yaa is Pro, provided Zaa is neither Pro nor hydroxyproline.. Functionally, type IV dipeptidyl-peptidase which removes N-terminal dipeptides sequentially from polypeptides having unsubstituted N-termini provided that the penultimate residue is proline. This is Probable dipeptidyl-aminopeptidase B (DAPB) from Blastomyces gilchristii (strain SLH14081) (Blastomyces dermatitidis).